A 487-amino-acid polypeptide reads, in one-letter code: Acetylcholine receptor subunit beta-type acr-3 (487 aa).

A signal peptide spans 1–20 (MQKIWLFSIITIFLITELQC). Residues 21–231 (YPNSAEERLL…KIRRKALFYT (211 aa)) are Extracellular-facing. N-linked (GlcNAc...) asparagine glycosylation occurs at asparagine 46. A disulfide bridge connects residues cysteine 151 and cysteine 165. Transmembrane regions (helical) follow at residues 232 to 252 (VILI…FYLP), 259 to 279 (ITLA…VSKI), and 294 to 314 (LLMT…IINV). The Cytoplasmic portion of the chain corresponds to 315–439 (YFRGPATHIM…WKFVSVVIDR (125 aa)). The interval 380 to 400 (ISEQPKQTSRKDGSSSEEKLS) is disordered. The chain crosses the membrane as a helical span at residues 440 to 460 (LLLYLFFAVTTGGTVGILLSA).

It belongs to the ligand-gated ion channel (TC 1.A.9) family. Acetylcholine receptor (TC 1.A.9.1) subfamily. As to quaternary structure, component of nicotinic acetylcholine receptor. In cholinergic motoneurons, composed of 2 non-alpha subunits acr-2 and acr-3, and 3 alpha subunits unc-38, unc-63 and acr-12.

It localises to the postsynaptic cell membrane. The protein resides in the cell membrane. In terms of biological role, non-alpha subunit of nicotinic acetylcholine receptor (nAChR). Probably acts in cholinergic motoneurons to regulate presynaptic neurotransmitter release, thereby ensuring normal level of excitation of cholinergic motoneurons during locomotion. This is Acetylcholine receptor subunit beta-type acr-3 (acr-3) from Caenorhabditis elegans.